Reading from the N-terminus, the 223-residue chain is Endonuclease V (223 aa).

D35 and D103 together coordinate Mg(2+).

The protein belongs to the endonuclease V family. Mg(2+) serves as cofactor.

The protein resides in the cytoplasm. It catalyses the reaction Endonucleolytic cleavage at apurinic or apyrimidinic sites to products with a 5'-phosphate.. DNA repair enzyme involved in the repair of deaminated bases. Selectively cleaves double-stranded DNA at the second phosphodiester bond 3' to a deoxyinosine leaving behind the intact lesion on the nicked DNA. This Cronobacter sakazakii (strain ATCC BAA-894) (Enterobacter sakazakii) protein is Endonuclease V.